Here is a 276-residue protein sequence, read N- to C-terminus: Tryptophan synthase alpha chain (276 aa).

Active-site proton acceptor residues include Glu-49 and Asp-60.

This sequence belongs to the TrpA family. Tetramer of two alpha and two beta chains.

The catalysed reaction is (1S,2R)-1-C-(indol-3-yl)glycerol 3-phosphate + L-serine = D-glyceraldehyde 3-phosphate + L-tryptophan + H2O. It participates in amino-acid biosynthesis; L-tryptophan biosynthesis; L-tryptophan from chorismate: step 5/5. Functionally, the alpha subunit is responsible for the aldol cleavage of indoleglycerol phosphate to indole and glyceraldehyde 3-phosphate. The chain is Tryptophan synthase alpha chain from Corynebacterium aurimucosum (strain ATCC 700975 / DSM 44827 / CIP 107346 / CN-1) (Corynebacterium nigricans).